A 370-amino-acid polypeptide reads, in one-letter code: Heme A synthase (370 aa).

8 consecutive transmembrane segments (helical) span residues 15–35 (VRIWLTLVAALIAVMVLVGGA), 104–124 (VIGIVYLLPFLWFLWRGAIGP), 129–149 (ALWIIFALGALQGAVGWWMVA), 161–181 (VRLATHLSLALIIYAAIVWTL), 200–220 (ALALLGLTFVQLYAGALVAGL), 261–280 (QFDHRMLAYALWTLAALHMI), 293–313 (GAVLLFLALTVQAALGIFTVL), and 317–337 (PIDLALAHQAMALVVLTLAVL). Residue histidine 264 coordinates heme. Heme is bound at residue histidine 324.

Belongs to the COX15/CtaA family. Type 2 subfamily. As to quaternary structure, interacts with CtaB. Heme b is required as a cofactor.

It localises to the cell membrane. It carries out the reaction Fe(II)-heme o + 2 A + H2O = Fe(II)-heme a + 2 AH2. The protein operates within porphyrin-containing compound metabolism; heme A biosynthesis; heme A from heme O: step 1/1. Its function is as follows. Catalyzes the conversion of heme O to heme A by two successive hydroxylations of the methyl group at C8. The first hydroxylation forms heme I, the second hydroxylation results in an unstable dihydroxymethyl group, which spontaneously dehydrates, resulting in the formyl group of heme A. The chain is Heme A synthase from Rhodopseudomonas palustris (strain TIE-1).